The following is a 513-amino-acid chain: Ankyrin repeat-containing protein YIL001W (513 aa).

ANK repeat units follow at residues K8–S37 and F41–R70. BTB domains are found at residues R122–Y179 and P274–W360.

This chain is Ankyrin repeat-containing protein YIL001W, found in Saccharomyces cerevisiae (strain ATCC 204508 / S288c) (Baker's yeast).